A 267-amino-acid chain; its full sequence is MKKIRVFVSGAGGKMGREVVRTILDQEDMQLVGASDARQQGRDIGELLAMAPLGIEITGPLEVAHLKETRADIMVDFTNPQSVLKNAKCALAAGVVPVLGTTGLDEADISEIRDLVDQTKVGAFIAPNFAIGAILMMRFAQEAAKYFPHVEIIELHHDQKLDAPSGTALKTVEWISEVRKPLVQGHPNEYEKIKGSRGGDVDGIHIHSVRLPGFIAHQEVIFGGLGQALTIRHDALSRETYMPGIMLAVRKASQLSNLVIGLENFLE.

10–15 provides a ligand contact to NAD(+); sequence GAGGKM. Residue Arg-38 coordinates NADP(+). NAD(+)-binding positions include 100–102 and 126–129; these read GTT and APNF. The Proton donor/acceptor role is filled by His-156. His-157 contacts (S)-2,3,4,5-tetrahydrodipicolinate. The Proton donor role is filled by Lys-160. 166–167 contributes to the (S)-2,3,4,5-tetrahydrodipicolinate binding site; the sequence is GT.

It belongs to the DapB family.

The protein localises to the cytoplasm. The enzyme catalyses (S)-2,3,4,5-tetrahydrodipicolinate + NAD(+) + H2O = (2S,4S)-4-hydroxy-2,3,4,5-tetrahydrodipicolinate + NADH + H(+). The catalysed reaction is (S)-2,3,4,5-tetrahydrodipicolinate + NADP(+) + H2O = (2S,4S)-4-hydroxy-2,3,4,5-tetrahydrodipicolinate + NADPH + H(+). Its pathway is amino-acid biosynthesis; L-lysine biosynthesis via DAP pathway; (S)-tetrahydrodipicolinate from L-aspartate: step 4/4. Its function is as follows. Catalyzes the conversion of 4-hydroxy-tetrahydrodipicolinate (HTPA) to tetrahydrodipicolinate. This chain is 4-hydroxy-tetrahydrodipicolinate reductase, found in Desulfitobacterium hafniense (strain DSM 10664 / DCB-2).